We begin with the raw amino-acid sequence, 147 residues long: D-aminoacyl-tRNA deacylase (147 aa).

The short motif at 138 to 139 (GP) is the Gly-cisPro motif, important for rejection of L-amino acids element.

Belongs to the DTD family. As to quaternary structure, homodimer.

It is found in the cytoplasm. The enzyme catalyses glycyl-tRNA(Ala) + H2O = tRNA(Ala) + glycine + H(+). It catalyses the reaction a D-aminoacyl-tRNA + H2O = a tRNA + a D-alpha-amino acid + H(+). An aminoacyl-tRNA editing enzyme that deacylates mischarged D-aminoacyl-tRNAs. Also deacylates mischarged glycyl-tRNA(Ala), protecting cells against glycine mischarging by AlaRS. Acts via tRNA-based rather than protein-based catalysis; rejects L-amino acids rather than detecting D-amino acids in the active site. By recycling D-aminoacyl-tRNA to D-amino acids and free tRNA molecules, this enzyme counteracts the toxicity associated with the formation of D-aminoacyl-tRNA entities in vivo and helps enforce protein L-homochirality. This chain is D-aminoacyl-tRNA deacylase, found in Prosthecochloris aestuarii (strain DSM 271 / SK 413).